The primary structure comprises 97 residues: Co-chaperonin GroES (97 aa).

It belongs to the GroES chaperonin family. As to quaternary structure, heptamer of 7 subunits arranged in a ring. Interacts with the chaperonin GroEL.

It is found in the cytoplasm. Its function is as follows. Together with the chaperonin GroEL, plays an essential role in assisting protein folding. The GroEL-GroES system forms a nano-cage that allows encapsulation of the non-native substrate proteins and provides a physical environment optimized to promote and accelerate protein folding. GroES binds to the apical surface of the GroEL ring, thereby capping the opening of the GroEL channel. The chain is Co-chaperonin GroES from Serratia proteamaculans (strain 568).